We begin with the raw amino-acid sequence, 132 residues long: ATP synthase epsilon chain (132 aa).

It belongs to the ATPase epsilon chain family. In terms of assembly, F-type ATPases have 2 components, CF(1) - the catalytic core - and CF(0) - the membrane proton channel. CF(1) has five subunits: alpha(3), beta(3), gamma(1), delta(1), epsilon(1). CF(0) has three main subunits: a, b and c.

Its subcellular location is the cell inner membrane. Produces ATP from ADP in the presence of a proton gradient across the membrane. This is ATP synthase epsilon chain from Jannaschia sp. (strain CCS1).